A 155-amino-acid chain; its full sequence is Effector protein PevD1 (155 aa).

The first 18 residues, 1–18 (MQFTLAAAAALFGASALA), serve as a signal peptide directing secretion. Positions 33–148 (NMYENIDIAD…NPTTIVIDSL (116 aa)) constitute an AA1-like domain. Cystine bridges form between Cys70-Cys84 and Cys125-Cys135.

In terms of assembly, monomer. Interacts with Arabidopsis thaliana NRP.

The protein localises to the secreted. Functionally, effector protein. Elicits a hypersensitive response (HR) in tobacco plants (N.tabacum) and cotton (G.hirsutum). Boosts systemic acquired resistance (SAR) to tobacco mosaic virus (TMV) infection in N.tabacum and to V.dhaliae infection in primed cotton seedlings. The polypeptide is Effector protein PevD1 (Verticillium dahliae (Verticillium wilt)).